The primary structure comprises 497 residues: Serine/threonine-protein phosphatase 2A 56 kDa regulatory subunit beta isoform (497 aa).

The span at 1–19 (METKLPPASTPTSPSSPGL) shows a compositional bias: low complexity. Disordered stretches follow at residues 1 to 55 (METK…YQSN) and 473 to 497 (QGTQGAKEAPVPRPTPQVAASGGQS). Phosphoserine occurs at positions 32, 35, 44, 46, 47, and 48. Over residues 34-45 (RSLRRARPRRSH) the composition is skewed to basic residues.

This sequence belongs to the phosphatase 2A regulatory subunit B56 family. As to quaternary structure, component of the serine/threonine-protein phosphatase 2A complex (PP2A). This complex consists of a common heterodimeric core enzyme, composed of a 36 kDa catalytic subunit (subunit C) and a 65 kDa constant scaffold subunit (PR65 or subunit A), that associates with a variety of regulatory subunits. Proteins that associate with the core dimer include three families of regulatory subunits B (the R2/B/PR55/B55, R3/B''/PR72/PR130/PR59 and R5/B'/B56 families), the 48 kDa variable regulatory subunit, viral proteins, and cell signaling molecules. Interacts with SGO1. Interacts with AKT1. In terms of processing, ubiquitinated by CUL3-KLHL15 complex; this modification leads to proteasomal degradation. In terms of tissue distribution, widely expressed at the mRNA level, with highest levels in cerebellum and lung.

Its subcellular location is the cytoplasm. In terms of biological role, as the regulatory component of the serine/threonine-protein phosphatase 2A (PP2A) holoenzyme, modulates substrate specificity, subcellular localization, and responsiveness to phosphorylation. The phosphorylated form mediates the interaction between PP2A and AKT1, leading to AKT1 dephosphorylation. The sequence is that of Serine/threonine-protein phosphatase 2A 56 kDa regulatory subunit beta isoform (Ppp2r5b) from Rattus norvegicus (Rat).